The primary structure comprises 127 residues: Calcitonin receptor-stimulating peptide 2 (127 aa).

The N-terminal stretch at 1–25 (MGFWKLSPFLAIGLLVMYQAGILQA) is a signal peptide. A propeptide spanning residues 26–81 (APFRSALENPLESATLTEDEICVLLTAVVKDYVQMKARELQQEQETEGSSLTAQKS) is cleaved from the precursor. Positions 65 to 85 (LQQEQETEGSSLTAQKSSCKD) are disordered. The segment covering 72-81 (EGSSLTAQKS) has biased composition (polar residues). A disulfide bridge links C83 with C88.

The protein belongs to the calcitonin family.

The protein resides in the secreted. This is Calcitonin receptor-stimulating peptide 2 (CRSP2) from Canis lupus familiaris (Dog).